Reading from the N-terminus, the 880-residue chain is Alanine--tRNA ligase (880 aa).

Residues 414-443 (TVDESEFESEMEKQRNRARKARSGGDTEGW) are disordered. The Zn(2+) site is built by H566, H570, C668, and H672.

It belongs to the class-II aminoacyl-tRNA synthetase family. Requires Zn(2+) as cofactor.

It localises to the cytoplasm. The enzyme catalyses tRNA(Ala) + L-alanine + ATP = L-alanyl-tRNA(Ala) + AMP + diphosphate. Its function is as follows. Catalyzes the attachment of alanine to tRNA(Ala) in a two-step reaction: alanine is first activated by ATP to form Ala-AMP and then transferred to the acceptor end of tRNA(Ala). Also edits incorrectly charged Ser-tRNA(Ala) and Gly-tRNA(Ala) via its editing domain. The polypeptide is Alanine--tRNA ligase (Alkaliphilus metalliredigens (strain QYMF)).